A 365-amino-acid chain; its full sequence is 3-isopropylmalate dehydrogenase (365 aa).

Residue 78 to 89 participates in NAD(+) binding; it reads GPKWGTGKVRPE. 4 residues coordinate substrate: R96, R106, R135, and D224. Mg(2+)-binding residues include D224, D249, and D253. Position 289–301 (289–301) interacts with NAD(+); the sequence is GSAPDISGKGIVN.

This sequence belongs to the isocitrate and isopropylmalate dehydrogenases family. Homodimer. It depends on Mg(2+) as a cofactor. Mn(2+) is required as a cofactor.

It localises to the cytoplasm. The catalysed reaction is (2R,3S)-3-isopropylmalate + NAD(+) = 4-methyl-2-oxopentanoate + CO2 + NADH. The protein operates within amino-acid biosynthesis; L-leucine biosynthesis; L-leucine from 3-methyl-2-oxobutanoate: step 3/4. Its function is as follows. Catalyzes the oxidation of 3-carboxy-2-hydroxy-4-methylpentanoate (3-isopropylmalate) to 3-carboxy-4-methyl-2-oxopentanoate. The product decarboxylates to 4-methyl-2 oxopentanoate. In Zymoseptoria tritici (Speckled leaf blotch fungus), this protein is 3-isopropylmalate dehydrogenase (LEUC).